Reading from the N-terminus, the 101-residue chain is Small ribosomal subunit protein uS14 (101 aa).

Positions 1–10 (MAKKSSIEKN) are enriched in basic and acidic residues. The segment at 1-23 (MAKKSSIEKNNRRRKMTKNAAPK) is disordered. The span at 11-23 (NRRRKMTKNAAPK) shows a compositional bias: basic residues.

It belongs to the universal ribosomal protein uS14 family. As to quaternary structure, part of the 30S ribosomal subunit. Contacts proteins S3 and S10.

Its function is as follows. Binds 16S rRNA, required for the assembly of 30S particles and may also be responsible for determining the conformation of the 16S rRNA at the A site. In Rhodopseudomonas palustris (strain BisB5), this protein is Small ribosomal subunit protein uS14.